The chain runs to 1426 residues: ABC transporter G family member 31 (1426 aa).

Asn6 and Asn150 each carry an N-linked (GlcNAc...) asparagine glycan. Residues 160–434 (LSSLRIIKPR…FESLGFRLPP (275 aa)) form the ABC transporter 1 domain. 193 to 200 (GPPGSGKS) is a binding site for ATP. Asn219 carries an N-linked (GlcNAc...) asparagine glycan. Thr276 carries the post-translational modification Phosphothreonine. The 214-residue stretch at 512–725 (ENLKVCFVRE…GQRAIAVNEF (214 aa)) folds into the ABC transmembrane type-2 1 domain. 6 helical membrane passes run 530-550 (FLYT…ATVF), 569-589 (CLFF…PLMI), 618-638 (VPYS…TVGL), 649-669 (MLLL…MASL), 675-695 (IANT…GFVI), and 760-780 (IGIA…TLAL). Residues 826 to 1078 (MTFHNVNYYV…VLVDYFQGIN (253 aa)) form the ABC transporter 2 domain. Asn856 carries N-linked (GlcNAc...) asparagine glycosylation. 871-878 (GSSGAGKT) contributes to the ATP binding site. Residues 1151-1365 (SQFLLCLWKQ…TLQGVILSQL (215 aa)) form the ABC transmembrane type-2 2 domain. 7 helical membrane passes run 1172 to 1192 (LVRL…FWDI), 1202 to 1222 (LITV…SNAS), 1258 to 1278 (IPYI…TIGF), 1285 to 1305 (FVLY…YGMM), 1315 to 1335 (LAAV…GFLV), 1342 to 1362 (VWWI…GVIL), and 1396 to 1416 (IGVS…AFAL).

It belongs to the ABC transporter superfamily. ABCG family. PDR (TC 3.A.1.205) subfamily. As to expression, expressed in seedlings, stems, leaves, siliques and inflorescence. In seeds, confined to the endosperm. Highly expressed in the tapetum of anthers.

Its subcellular location is the cell membrane. The catalysed reaction is abscisate(in) + ATP + H2O = abscisate(out) + ADP + phosphate + H(+). Functionally, together with ABCG25, export abscisic acid (ABA) from the endosperm to deliver it to the embryo via ABCG30 and ABCG40-mediated import to suppress radicle extension and subsequent embryonic growth. Together with ABCG9, involved in pollen coat deposition of steryl glycosides required for pollen fitness. May be a general defense protein. This chain is ABC transporter G family member 31, found in Arabidopsis thaliana (Mouse-ear cress).